Here is a 244-residue protein sequence, read N- to C-terminus: MSTSKRKRADEAQWNKRSTKKKGSAPQAKKPGGKGERPSLQIQTLLHSGDTMITVPSGGVCDLINTYARGSDEGNRHTSETLTYKVGVDYHFVADAASCKYSNRGTGVMWLVYDTTPGGNAPTTQDIFAYPSALKAWPTTWKVSRELCHRFVVKRRWLFTMETDGRIGSDTPPSNQSWPPCKRNVDFHKFTSGLGVRTQWKNVTDGGVGAIQRGALYLVIAPGNGITFTAHGQTRLYFKSVGNQ.

The Bipartite nuclear localization signal motif lies at 1-24; that stretch reads MSTSKRKRADEAQWNKRSTKKKGS. A disordered region spans residues 1-39; it reads MSTSKRKRADEAQWNKRSTKKKGSAPQAKKPGGKGERPS.

It belongs to the geminiviridae capsid protein family. Homomultimer. Interacts with the movement protein. Binds to single-stranded and double-stranded viral DNA.

It localises to the virion. It is found in the host nucleus. In terms of biological role, encapsidates the viral genome into characteristic twinned ('geminate') particles. Binds the genomic viral ssDNA and shuttles it into and out of the cell nucleus. Plays a role in protection of the genome from degradation, virus acquisition and transmission by insect vectors, infectivity, and systemic movement. The CP of monopartite geminiviruses is absolutely essential for virus movement. This Avena sativa (Oat) protein is Capsid protein.